A 323-amino-acid chain; its full sequence is L-lactate dehydrogenase (323 aa).

The NAD(+) site is built by valine 11, aspartate 32, and tyrosine 63. Glutamine 80 and arginine 86 together coordinate substrate. NAD(+) is bound by residues serine 99, 116 to 118, and serine 141; that span reads VSN. Residue 118–121 coordinates substrate; the sequence is NPVD. 146–149 lines the substrate pocket; it reads DTAR. Beta-D-fructose 1,6-bisphosphate-binding residues include arginine 151 and histidine 166. Histidine 173 acts as the Proton acceptor in catalysis. The residue at position 221 (tyrosine 221) is a Phosphotyrosine. Residue threonine 230 participates in substrate binding.

This sequence belongs to the LDH/MDH superfamily. LDH family. As to quaternary structure, homotetramer.

The protein localises to the cytoplasm. The catalysed reaction is (S)-lactate + NAD(+) = pyruvate + NADH + H(+). It participates in fermentation; pyruvate fermentation to lactate; (S)-lactate from pyruvate: step 1/1. Allosterically activated by fructose 1,6-bisphosphate (FBP). Catalyzes the conversion of lactate to pyruvate. This chain is L-lactate dehydrogenase, found in Kosmotoga olearia (strain ATCC BAA-1733 / DSM 21960 / TBF 19.5.1).